Here is a 247-residue protein sequence, read N- to C-terminus: Geranylgeranylglyceryl phosphate synthase (247 aa).

Residues D23 and S52 each coordinate Mg(2+). Sn-glycerol 1-phosphate contacts are provided by residues 171-177 (YLEAGSG), 203-204 (GG), and 225-226 (GT).

Belongs to the GGGP/HepGP synthase family. Group II subfamily. Mg(2+) is required as a cofactor.

It is found in the cytoplasm. It catalyses the reaction sn-glycerol 1-phosphate + (2E,6E,10E)-geranylgeranyl diphosphate = sn-3-O-(geranylgeranyl)glycerol 1-phosphate + diphosphate. It participates in membrane lipid metabolism; glycerophospholipid metabolism. Prenyltransferase that catalyzes the transfer of the geranylgeranyl moiety of geranylgeranyl diphosphate (GGPP) to the C3 hydroxyl of sn-glycerol-1-phosphate (G1P). This reaction is the first ether-bond-formation step in the biosynthesis of archaeal membrane lipids. The sequence is that of Geranylgeranylglyceryl phosphate synthase from Methanosarcina barkeri (strain Fusaro / DSM 804).